Here is a 73-residue protein sequence, read N- to C-terminus: Ubiquitin-like protein 5 (73 aa).

The 73-residue stretch at 1-73 folds into the Ubiquitin-like domain; the sequence is MIEVVCNDRL…DGMNLELYYL (73 aa).

Its subcellular location is the cytoplasm. The chain is Ubiquitin-like protein 5 (ubl5) from Danio rerio (Zebrafish).